We begin with the raw amino-acid sequence, 121 residues long: Ribonuclease P protein component (121 aa).

The protein belongs to the RnpA family. In terms of assembly, consists of a catalytic RNA component (M1 or rnpB) and a protein subunit.

The enzyme catalyses Endonucleolytic cleavage of RNA, removing 5'-extranucleotides from tRNA precursor.. Functionally, RNaseP catalyzes the removal of the 5'-leader sequence from pre-tRNA to produce the mature 5'-terminus. It can also cleave other RNA substrates such as 4.5S RNA. The protein component plays an auxiliary but essential role in vivo by binding to the 5'-leader sequence and broadening the substrate specificity of the ribozyme. This Oceanobacillus iheyensis (strain DSM 14371 / CIP 107618 / JCM 11309 / KCTC 3954 / HTE831) protein is Ribonuclease P protein component.